The sequence spans 177 residues: Large ribosomal subunit protein uL6 (177 aa).

This sequence belongs to the universal ribosomal protein uL6 family. In terms of assembly, part of the 50S ribosomal subunit.

This protein binds to the 23S rRNA, and is important in its secondary structure. It is located near the subunit interface in the base of the L7/L12 stalk, and near the tRNA binding site of the peptidyltransferase center. This chain is Large ribosomal subunit protein uL6, found in Vibrio cholerae serotype O1 (strain ATCC 39315 / El Tor Inaba N16961).